A 266-amino-acid chain; its full sequence is Outer membrane protein OmpK (266 aa).

An N-terminal signal peptide occupies residues 1–20; sequence MRKSLLALSLLAATSAPVLA.

This sequence belongs to the nucleoside-specific channel-forming outer membrane porin (Tsx) (TC 1.B.10) family.

It is found in the cell outer membrane. Functionally, serves as receptor for a broad-host-range vibriophage, KVP40. This Vibrio parahaemolyticus serotype O3:K6 (strain RIMD 2210633) protein is Outer membrane protein OmpK (ompK).